The chain runs to 112 residues: Cytochrome c3 (112 aa).

Positions 26, 29, 34, 37, 38, 39, 49, 54, 55, 73, 83, 86, 87, 104, 109, and 110 each coordinate heme c.

Requires heme as cofactor.

In terms of biological role, participates in sulfate respiration coupled with phosphorylation by transferring electrons from the enzyme dehydrogenase to ferredoxin. This Megalodesulfovibrio gigas (strain ATCC 19364 / DSM 1382 / NCIMB 9332 / VKM B-1759) (Desulfovibrio gigas) protein is Cytochrome c3.